The primary structure comprises 511 residues: Sphingosine-1-phosphate transporter MFSD2B (511 aa).

Helical transmembrane passes span 108–128 (MPWM…LWFV), 136–156 (VLWY…YHVP), 236–256 (IAAG…FLGV), 280–300 (TMQF…SAAV), 323–343 (NLVL…QWFL), 357–377 (LMIP…AYVV), 379–399 (VASG…LPDV), 415–435 (AIFY…ALGI), and 462–482 (LLIG…LAFY).

This sequence belongs to the major facilitator superfamily.

It is found in the cell membrane. It carries out the reaction sphing-4-enine 1-phosphate(in) = sphing-4-enine 1-phosphate(out). It catalyses the reaction sphinganine 1-phosphate(in) = sphinganine 1-phosphate(out). The catalysed reaction is sphinga-4E,14Z-dienine-1-phosphate(in) = sphinga-4E,14Z-dienine-1-phosphate(out). Lipid transporter that specifically mediates export of sphingosine-1-phosphate in red blood cells and platelets. Sphingosine-1-phosphate is a signaling sphingolipid and its export from red blood cells into in the plasma is required for red blood cell morphology. Sphingosine-1-phosphate export from platelets is required for platelet aggregation and thrombus formation. In addition to export, also able to mediate S1P import. The chain is Sphingosine-1-phosphate transporter MFSD2B from Xenopus tropicalis (Western clawed frog).